A 110-amino-acid polypeptide reads, in one-letter code: UPF0122 protein Aflv_1766 (110 aa).

This sequence belongs to the UPF0122 family.

Functionally, might take part in the signal recognition particle (SRP) pathway. This is inferred from the conservation of its genetic proximity to ftsY/ffh. May be a regulatory protein. This is UPF0122 protein Aflv_1766 from Anoxybacillus flavithermus (strain DSM 21510 / WK1).